The chain runs to 376 residues: UPF0754 membrane protein SERP1382 (376 aa).

A run of 2 helical transmembrane segments spans residues 4–24 (ILLVVFMIILGAIIGGVTNMI) and 356–376 (TLGFILGGIIGFFQGVIAIFV).

This sequence belongs to the UPF0754 family.

It localises to the cell membrane. The sequence is that of UPF0754 membrane protein SERP1382 from Staphylococcus epidermidis (strain ATCC 35984 / DSM 28319 / BCRC 17069 / CCUG 31568 / BM 3577 / RP62A).